Consider the following 437-residue polypeptide: Protein translocase subunit SecY (437 aa).

Transmembrane regions (helical) follow at residues 19 to 39 (LFTL…IPGV), 69 to 89 (LLQI…SIIL), 122 to 142 (VALA…GALF), 157 to 177 (IFTT…VMWL), 189 to 209 (GMSI…LWAI), 219 to 239 (WIEF…VVFV), 275 to 295 (GVIP…IVQF), 318 to 338 (HIIL…AISF), 378 to 398 (GSLY…GFGA), and 400 to 420 (QNFP…LETV).

The protein belongs to the SecY/SEC61-alpha family. As to quaternary structure, component of the Sec protein translocase complex. Heterotrimer consisting of SecY, SecE and SecG subunits. The heterotrimers can form oligomers, although 1 heterotrimer is thought to be able to translocate proteins. Interacts with the ribosome. Interacts with SecDF, and other proteins may be involved. Interacts with SecA.

It localises to the cell membrane. Functionally, the central subunit of the protein translocation channel SecYEG. Consists of two halves formed by TMs 1-5 and 6-10. These two domains form a lateral gate at the front which open onto the bilayer between TMs 2 and 7, and are clamped together by SecE at the back. The channel is closed by both a pore ring composed of hydrophobic SecY resides and a short helix (helix 2A) on the extracellular side of the membrane which forms a plug. The plug probably moves laterally to allow the channel to open. The ring and the pore may move independently. This chain is Protein translocase subunit SecY, found in Streptomyces coelicolor (strain ATCC BAA-471 / A3(2) / M145).